We begin with the raw amino-acid sequence, 83 residues long: U-actitoxin-Avd8d (83 aa).

An N-terminal signal peptide occupies residues 1–19 (MASTRLFVLLVIGTVLLCQ). Residues 20–38 (VSGFLDELLAEHELPQDMT) constitute a propeptide that is removed on maturation.

The protein belongs to the sea anemone 8 toxin family.

It is found in the secreted. It localises to the nematocyst. The polypeptide is U-actitoxin-Avd8d (Anemonia viridis (Snakelocks anemone)).